Reading from the N-terminus, the 402-residue chain is S-adenosylmethionine synthase (402 aa).

ATP is bound at residue 137–142 (GQGSAD).

Belongs to the AdoMet synthase 2 family. Mg(2+) serves as cofactor.

It carries out the reaction L-methionine + ATP + H2O = S-adenosyl-L-methionine + phosphate + diphosphate. It functions in the pathway amino-acid biosynthesis; S-adenosyl-L-methionine biosynthesis; S-adenosyl-L-methionine from L-methionine: step 1/1. Its function is as follows. Catalyzes the formation of S-adenosylmethionine from methionine and ATP. The polypeptide is S-adenosylmethionine synthase (Pyrobaculum aerophilum (strain ATCC 51768 / DSM 7523 / JCM 9630 / CIP 104966 / NBRC 100827 / IM2)).